We begin with the raw amino-acid sequence, 298 residues long: Protein BZR1 homolog 1 (298 aa).

4 disordered regions span residues 1–25 (MTSGAAAAGRTPTWKERENNKRRER), 71–129 (GTTY…SPSR), 153–175 (VSSSAPVTPPLSSPTASRPPKIR), and 190–217 (AVSAPASPTRGRRLEHPDTIPECDESDV). The required for DNA-binding stretch occupies residues 10 to 91 (RTPTWKEREN…PSSAGGASVG (82 aa)). Low complexity predominate over residues 96–128 (SSTQLLSAPSSSFPSPVPSYHASPASSSFPSPS). A Phosphoserine modification is found at S156. The tract at residues 204-224 (EHPDTIPECDESDVSTVDSGR) is PEST-like.

Belongs to the BZR/LAT61 family. Interacts with GF14C. Interacts with PUB24. Interacts with SMOS1. Post-translationally, phosphorylated on serine and threonine residues by GSK2. Dephosphorylated during response to brassinosteroid. Ubiquitinated by PUB24. Ubiquitination leads to its subsequent degradation by the 26S proteasome, thus reducing sensitivity to brassinosteroid signaling.

Its subcellular location is the nucleus. The protein resides in the cytoplasm. In terms of biological role, positive brassinosteroid-signaling protein. Mediates downstream brassinosteroid-regulated growth response and feedback inhibition of brassinosteroid (BR) biosynthetic genes. May act as transcriptional repressor by binding the brassinosteroid-response element (BREE) (5'-CGTG(T/C)G-3') in the promoter of DLT (AC Q9LWU9), another positive regulator of BR signaling. Acts as a transcriptional repressor of LIC, a negative regulator of BR signaling, by binding to the BRRE element of its promoter. BZR1 and LIC play opposite roles in BR signaling and regulation of leaf bending. The protein is Protein BZR1 homolog 1 of Oryza sativa subsp. japonica (Rice).